The following is a 164-amino-acid chain: Low molecular weight phosphotyrosine protein phosphatase 2 (164 aa).

C14 functions as the Nucleophile in the catalytic mechanism. R20 is an active-site residue. D130 (proton donor) is an active-site residue.

Belongs to the low molecular weight phosphotyrosine protein phosphatase family. Cone cells and primary pigment cells in developing pupal retina.

It is found in the cytoplasm. It carries out the reaction O-phospho-L-tyrosyl-[protein] + H2O = L-tyrosyl-[protein] + phosphate. The catalysed reaction is a phosphate monoester + H2O = an alcohol + phosphate. Its function is as follows. Catalyzes the dephosphorylation of tyrosine phosphorylated proteins and low-MW aryl phosphates. Can contribute to the regulation of a variety of developmental processes. This Drosophila melanogaster (Fruit fly) protein is Low molecular weight phosphotyrosine protein phosphatase 2 (primo-2).